The sequence spans 231 residues: Two-component response regulator ORR1 (231 aa).

A Response regulatory domain is found at 9-135; that stretch reads RVLLVDDSPV…DVQRLRNCSP (127 aa). Asp-68 carries the 4-aspartylphosphate modification.

The protein belongs to the ARR family. Type-A subfamily. Two-component system major event consists of a His-to-Asp phosphorelay between a sensor histidine kinase (HK) and a response regulator (RR). In plants, the His-to-Asp phosphorelay involves an additional intermediate named Histidine-containing phosphotransfer protein (HPt). This multistep phosphorelay consists of a His-Asp-His-Asp sequential transfer of a phosphate group between first a His and an Asp of the HK protein, followed by the transfer to a conserved His of the HPt protein and finally the transfer to an Asp in the receiver domain of the RR protein. Expressed in roots, leaf blades, leaf sheaths, shoot apex, flowers and panicles.

In terms of biological role, functions as a response regulator involved in His-to-Asp phosphorelay signal transduction system. Phosphorylation of the Asp residue in the receiver domain activates the ability of the protein to promote the transcription of target genes. Type-A response regulators seem to act as negative regulators of the cytokinin signaling. Involved in adventitious (crown) root initiation under the regulation of CRL5. The polypeptide is Two-component response regulator ORR1 (Oryza sativa subsp. japonica (Rice)).